A 4499-amino-acid polypeptide reads, in one-letter code: Dynein alpha chain, flagellar outer arm (4499 aa).

A stem region spans residues 1 to 1677; it reads MSIFWEVPNA…RIRICDASFP (1677 aa). Kelch repeat units lie at residues 29–84, 86–135, 137–183, 199–245, 253–304, and 307–358; these read RFVL…ALDD, RLLV…RFGS, VFIF…RFDH, KLLI…VCDG, KVFS…FDVK, and SLLI…IRGL. A Filamin repeat occupies 425-534; it reads FANTAARNCI…IRGSPFTVKC (110 aa). Kelch repeat units follow at residues 562-608 and 610-661; these read ELVL…VLSD and ELVV…AVSA. Residues 653–720 form a disordered region; that stretch reads PKGAAAVSAE…SRPVSAKPAP (68 aa). Over residues 655–689 the composition is skewed to low complexity; it reads GAAAVSAEPSAEPAAEPAAEPAAEPDADAPAAEPA. The span at 690–705 shows a compositional bias: acidic residues; that stretch reads AEGEEGAVPAEGEEGA. Kelch repeat units follow at residues 750–801 and 864–913; these read LYVM…ATGN and KLFL…TLSG. Coiled-coil stretches lie at residues 1261–1334 and 1382–1450; these read ELHK…MIAN and KKEL…RRAF. AAA stretches follow at residues 1678 to 1921 and 1981 to 2225; these read YGYE…VLVV and DVIV…KSYS. ATP contacts are provided by residues 1716-1723 and 2019-2026; these read GPAGTGKT and GPTGTGRT. A Kelch 11 repeat occupies 2269 to 2317; sequence MIWAFGGGLVEKDGIPYRRNFDKWFKQTWTTVKIPGKGTVYDYFVNPKT. 2 AAA regions span residues 2331–2577 and 2679–2928; these read DYDG…VFQG and EYNE…ERRY. 2369-2376 provides a ligand contact to ATP; sequence GGAGVGKT. Positions 2655–2688 form a coiled coil; the sequence is LADKAYDEVADYTSLYKTLTEALNEYNETNAAMD. 2717-2724 lines the ATP pocket; the sequence is GVGGSGKQ. Residues 3003–3023 adopt a coiled-coil conformation; sequence VGVEKEKVNAENAAAQVEAEK. Residues 3003–3262 form a stalk region; it reads VGVEKEKVNA…ERWALTVEQL (260 aa). A Kelch 12 repeat occupies 3070 to 3117; the sequence is LKKPPPGVDDITAVVIILLENNPKDKSWQAAQKLMNNVDKFLERVKSF. Coiled coils occupy residues 3170–3262 and 3486–3515; these read DVVQ…VEQL and NKER…ELED. Residues 3320-3550 form an AAA 5 region; that stretch reads LVDDALVAGW…AKRVSTEISE (231 aa). The interval 3614–3687 is disordered; the sequence is GRKKGKGLKK…VGDAEDEDDE (74 aa). Residues 3630–3653 are compositionally biased toward basic and acidic residues; the sequence is QPMDHQSLMEKARRSSGVGDRRPS. Residues 3843–4082 form an AAA 6 region; sequence LQNFCEHMMG…LTTCGDVLYN (240 aa).

The protein belongs to the dynein heavy chain family. As to quaternary structure, consists of at least 3 heavy chains (alpha, beta and gamma), 2 intermediate chains and 8 light chains.

The protein resides in the cell projection. It is found in the cilium. It localises to the flagellum. Its subcellular location is the cytoplasm. The protein localises to the cytoskeleton. The protein resides in the flagellum axoneme. In terms of biological role, force generating protein of eukaryotic cilia and flagella. Produces force towards the minus ends of microtubules. Dynein has ATPase activity; the force-producing power stroke is thought to occur on release of ADP. The polypeptide is Dynein alpha chain, flagellar outer arm (ODA11) (Chlamydomonas reinhardtii (Chlamydomonas smithii)).